Reading from the N-terminus, the 336-residue chain is D-alanine--D-alanine ligase (336 aa).

Positions 124–330 constitute an ATP-grasp domain; it reads KMWFSALGIP…FTEYLSLVIN (207 aa). ATP is bound at residue 154–209; the sequence is ALENWGSIFVKAASQGSSVGCYKVDDSSKVADVLKDAFGYAPYVIVEKTIKARELE. Asp-284, Glu-297, and Asn-299 together coordinate Mg(2+).

Belongs to the D-alanine--D-alanine ligase family. Mg(2+) serves as cofactor. Requires Mn(2+) as cofactor.

Its subcellular location is the cytoplasm. The catalysed reaction is 2 D-alanine + ATP = D-alanyl-D-alanine + ADP + phosphate + H(+). The protein operates within cell wall biogenesis; peptidoglycan biosynthesis. Functionally, cell wall formation. This Shewanella sp. (strain ANA-3) protein is D-alanine--D-alanine ligase.